The primary structure comprises 1121 residues: Linoleate 10R-lipoxygenase (1121 aa).

The segment at 1–66 (MLRRFSSTFK…NEKKGNSVSP (66 aa)) is disordered. Positions 22 to 36 (TASSSSAAVANTNNN) are enriched in low complexity. The span at 50–61 (SSSDDDRNEKKG) shows a compositional bias: basic and acidic residues. His253 functions as the Proton acceptor in the catalytic mechanism. The Ca(2+) site is built by Asp254, Ser269, Tyr271, Asp273, and Ser275.

The protein belongs to the peroxidase family.

The catalysed reaction is (9Z,12Z)-octadecadienoate + O2 = (8E,10R,12Z)-10-hydroperoxyoctadeca-8,12-dienoate. In terms of biological role, responsible for the synthesis of various fatty acid-derived oxylipins. Oxidizes linoleic acid primarily to 10R-hydroperoxy-8,12-octadecadienoic acid (10R-HPODE) and, to a lesser extent, 8R-hydroperoxylinoleic acid (8R-HPODE). Also synthesizes 10-hydroxy-octadeca-8,12-dienoic acid (10-HODE) from linoleic acid and primarily 8R-hydroxy-octadeca-9-monoenoic acid (8-HOME, also known as psiB beta) from oleic acid. 8-HOME forms part of psi factor, a mixture of oxylipins that regulates the balance between sexual and asexual spore production. Displays epoxyalcohol synthase activity. Plays a role in the synthesis of prostaglandins which may be required for pathogenicity. This is Linoleate 10R-lipoxygenase from Aspergillus fumigatus (strain ATCC MYA-4609 / CBS 101355 / FGSC A1100 / Af293) (Neosartorya fumigata).